The primary structure comprises 25 residues: M-poneritoxin-Na1b (25 aa).

This sequence belongs to the non-disulfide-bridged peptide (NDBP) superfamily. Medium-length antimicrobial peptide (group 3) family. Ponericin-W subfamily. In terms of tissue distribution, expressed by the venom gland.

It is found in the secreted. The protein resides in the target cell membrane. In terms of biological role, membrane-perturbating peptide with multiple activities. It is insecticidal, since it induces reversible paralysis in insects (L.cuprina) after 1 hour, but fails to kill flies. It shows a relatively strong and broad-spectrum antibacterial activity against both Gram-positive and Gram-negative bacteria (MIC&lt;20 uM). It is also anthelmintic, since it potently inhibits the larval development of the major pathogenic nematode of ruminants (H.contortus, IC(50)=2.8 uM). Interestingly, only at 10 uM, it increases adult males motility of the other nematode B.malayi for 24 hours post-treatment, followed by a reduction in motility for the rest of the experiment. It shows cytotoxic activity against HEK293 cells (EC(50)=4-6 uM) and induces hemolysis in human erythrocytes (EC(50)=40-62 uM). In addition, it causes an important increase in intracellular calcium concentration on neuronal and epithelial cell lines, which supports a non-specific membrane perturbation mechanism of action. In vivo, it induces pain by intraplantar injection into mice, suggesting a defensive function against vertebrate predators. The polypeptide is M-poneritoxin-Na1b (Neoponera apicalis (Ant)).